Consider the following 79-residue polypeptide: MPKRIMQGVVVSDKMDKTIVVQVERRFKHAVYKKFIKRTKKFAAHDELNQFKIGDLVRIRECAPISRRKTWEVVLDNAE.

It belongs to the universal ribosomal protein uS17 family. Part of the 30S ribosomal subunit.

In terms of biological role, one of the primary rRNA binding proteins, it binds specifically to the 5'-end of 16S ribosomal RNA. The polypeptide is Small ribosomal subunit protein uS17 (Rhodospirillum rubrum (strain ATCC 11170 / ATH 1.1.1 / DSM 467 / LMG 4362 / NCIMB 8255 / S1)).